The sequence spans 1052 residues: uncharacterized protein (1052 aa).

This sequence belongs to the IIV-6 050L family.

This is an uncharacterized protein from Invertebrate iridescent virus 6 (IIV-6).